Consider the following 100-residue polypeptide: NADH-quinone oxidoreductase subunit K (100 aa).

The next 3 helical transmembrane spans lie at 4-24, 29-49, and 60-80; these read LNYG…SLLI, IFIL…FILI, and VLYI…LAIF.

It belongs to the complex I subunit 4L family. NDH-1 is composed of 13 different subunits. Subunits NuoA, H, J, K, L, M, N constitute the membrane sector of the complex.

Its subcellular location is the cell membrane. The enzyme catalyses a quinone + NADH + 5 H(+)(in) = a quinol + NAD(+) + 4 H(+)(out). NDH-1 shuttles electrons from NADH, via FMN and iron-sulfur (Fe-S) centers, to quinones in the respiratory chain. The immediate electron acceptor for the enzyme in this species is believed to be ubiquinone. Couples the redox reaction to proton translocation (for every two electrons transferred, four hydrogen ions are translocated across the cytoplasmic membrane), and thus conserves the redox energy in a proton gradient. The protein is NADH-quinone oxidoreductase subunit K of Buchnera aphidicola subsp. Cinara cedri (strain Cc).